The sequence spans 291 residues: Porphobilinogen deaminase (291 aa).

The residue at position 237 (C237) is an S-(dipyrrolylmethanemethyl)cysteine.

The protein belongs to the HMBS family. Monomer. Dipyrromethane is required as a cofactor.

It carries out the reaction 4 porphobilinogen + H2O = hydroxymethylbilane + 4 NH4(+). It functions in the pathway porphyrin-containing compound metabolism; protoporphyrin-IX biosynthesis; coproporphyrinogen-III from 5-aminolevulinate: step 2/4. Functionally, tetrapolymerization of the monopyrrole PBG into the hydroxymethylbilane pre-uroporphyrinogen in several discrete steps. The chain is Porphobilinogen deaminase from Clostridium perfringens (strain ATCC 13124 / DSM 756 / JCM 1290 / NCIMB 6125 / NCTC 8237 / Type A).